The primary structure comprises 146 residues: D-aminoacyl-tRNA deacylase (146 aa).

The Gly-cisPro motif, important for rejection of L-amino acids motif lies at 137–138 (GP).

This sequence belongs to the DTD family. In terms of assembly, homodimer.

The protein resides in the cytoplasm. It catalyses the reaction glycyl-tRNA(Ala) + H2O = tRNA(Ala) + glycine + H(+). The catalysed reaction is a D-aminoacyl-tRNA + H2O = a tRNA + a D-alpha-amino acid + H(+). In terms of biological role, an aminoacyl-tRNA editing enzyme that deacylates mischarged D-aminoacyl-tRNAs. Also deacylates mischarged glycyl-tRNA(Ala), protecting cells against glycine mischarging by AlaRS. Acts via tRNA-based rather than protein-based catalysis; rejects L-amino acids rather than detecting D-amino acids in the active site. By recycling D-aminoacyl-tRNA to D-amino acids and free tRNA molecules, this enzyme counteracts the toxicity associated with the formation of D-aminoacyl-tRNA entities in vivo and helps enforce protein L-homochirality. In Thermodesulfovibrio yellowstonii (strain ATCC 51303 / DSM 11347 / YP87), this protein is D-aminoacyl-tRNA deacylase.